We begin with the raw amino-acid sequence, 340 residues long: Glutamyl-tRNA reductase (340 aa).

Substrate-binding positions include 49–52 (TCNR), S108, 113–115 (ETE), and Q119. C50 serves as the catalytic Nucleophile. 188–193 (GAGEMS) is an NADP(+) binding site.

This sequence belongs to the glutamyl-tRNA reductase family. Homodimer.

It carries out the reaction (S)-4-amino-5-oxopentanoate + tRNA(Glu) + NADP(+) = L-glutamyl-tRNA(Glu) + NADPH + H(+). The protein operates within porphyrin-containing compound metabolism; protoporphyrin-IX biosynthesis; 5-aminolevulinate from L-glutamyl-tRNA(Glu): step 1/2. Its function is as follows. Catalyzes the NADPH-dependent reduction of glutamyl-tRNA(Glu) to glutamate 1-semialdehyde (GSA). This Akkermansia muciniphila (strain ATCC BAA-835 / DSM 22959 / JCM 33894 / BCRC 81048 / CCUG 64013 / CIP 107961 / Muc) protein is Glutamyl-tRNA reductase.